The chain runs to 439 residues: Putative phosphatidate cytidylyltransferase (439 aa).

The interval Met-1–Arg-37 is disordered. Position 12 is a phosphoserine (Ser-12). A compositionally biased stretch (polar residues) spans Asn-24–Thr-33. 7 consecutive transmembrane segments (helical) span residues Phe-52–Ala-71, Trp-76–Val-98, Phe-110–Ala-130, Leu-145–Val-165, Phe-180–Asn-199, Gly-245–Met-265, and Phe-321–Ala-341.

Belongs to the CDS family. Mg(2+) serves as cofactor.

The protein localises to the endoplasmic reticulum membrane. The catalysed reaction is a 1,2-diacyl-sn-glycero-3-phosphate + CTP + H(+) = a CDP-1,2-diacyl-sn-glycerol + diphosphate. The protein operates within phospholipid metabolism; CDP-diacylglycerol biosynthesis; CDP-diacylglycerol from sn-glycerol 3-phosphate: step 3/3. Its function is as follows. Supplies CDP-diacylglycerol, which may play an important role as both a precursor to phosphoinositide biosynthesis in the plasma membrane and as a negative effector of phosphatidylinositol 4-kinase activity, thereby exerting an effect on cell proliferation via a lipid-dependent signal transduction cascade. The protein is Putative phosphatidate cytidylyltransferase of Schizosaccharomyces pombe (strain 972 / ATCC 24843) (Fission yeast).